A 210-amino-acid polypeptide reads, in one-letter code: Proteasome subunit beta (210 aa).

Residues 1–10 (MKELDQLTKG) constitute a propeptide, removed in mature form; by autocatalysis. Threonine 11 acts as the Nucleophile in catalysis.

It belongs to the peptidase T1B family. In terms of assembly, the 20S proteasome core is composed of 14 alpha and 14 beta subunits that assemble into four stacked heptameric rings, resulting in a barrel-shaped structure. The two inner rings, each composed of seven catalytic beta subunits, are sandwiched by two outer rings, each composed of seven alpha subunits. The catalytic chamber with the active sites is on the inside of the barrel. Has a gated structure, the ends of the cylinder being occluded by the N-termini of the alpha-subunits. Is capped at one or both ends by the proteasome regulatory ATPase, PAN.

The protein localises to the cytoplasm. It catalyses the reaction Cleavage of peptide bonds with very broad specificity.. With respect to regulation, the formation of the proteasomal ATPase PAN-20S proteasome complex, via the docking of the C-termini of PAN into the intersubunit pockets in the alpha-rings, triggers opening of the gate for substrate entry. Interconversion between the open-gate and close-gate conformations leads to a dynamic regulation of the 20S proteasome proteolysis activity. Functionally, component of the proteasome core, a large protease complex with broad specificity involved in protein degradation. The polypeptide is Proteasome subunit beta (Methanopyrus kandleri (strain AV19 / DSM 6324 / JCM 9639 / NBRC 100938)).